We begin with the raw amino-acid sequence, 181 residues long: Probable cobalt-precorrin-6B C(15)-methyltransferase (decarboxylating) (181 aa).

S-adenosyl-L-methionine-binding positions include Thr16, Gly40–Gly44, Asp61, and Ala89.

The protein belongs to the methyltransferase superfamily. Archaeal-type CbiT family.

The enzyme catalyses Co-precorrin-6B + S-adenosyl-L-methionine = Co-precorrin-7 + S-adenosyl-L-homocysteine + CO2. It participates in cofactor biosynthesis; adenosylcobalamin biosynthesis; cob(II)yrinate a,c-diamide from sirohydrochlorin (anaerobic route): step 8/10. In terms of biological role, catalyzes the methylation of C-15 in cobalt-precorrin-6B followed by the decarboxylation of C-12 to form cobalt-precorrin-7. In Methanococcus maripaludis (strain DSM 14266 / JCM 13030 / NBRC 101832 / S2 / LL), this protein is Probable cobalt-precorrin-6B C(15)-methyltransferase (decarboxylating).